A 103-amino-acid chain; its full sequence is UPF0235 protein RHECIAT_CH0004196 (103 aa).

It belongs to the UPF0235 family.

The polypeptide is UPF0235 protein RHECIAT_CH0004196 (Rhizobium etli (strain CIAT 652)).